Reading from the N-terminus, the 141-residue chain is Cystatin (141 aa).

The signal sequence occupies residues 1-26 (MLHSQLPVAAPLRLLCALLLLPSVTM). In terms of domain architecture, Cystatin spans 29–129 (GGLSPRSVTD…CRFQVWSRPW (101 aa)). The short motif at 73-77 (QVVTG) is the Secondary area of contact element. 2 cysteine pairs are disulfide-bonded: C91/C107 and C120/C140.

The protein belongs to the cystatin family. Expressed at a low level by the venom gland (at protein level).

The protein localises to the secreted. Its function is as follows. Inhibits various C1 cysteine proteases including cathepsin L, papain and cathepsin B. This protein has no toxic activity and its function in the venom is unknown. It may play a role as a housekeeping or regulatory protein. The polypeptide is Cystatin (Hoplocephalus stephensii (Stephens's banded snake)).